The chain runs to 156 residues: SCP2 sterol-binding domain-containing protein 1 (156 aa).

The region spanning 44 to 156 is the SCP2 domain; the sequence is NFSVFEDISQ…ERIFREWAKI (113 aa).

The protein is SCP2 sterol-binding domain-containing protein 1 (Scp2d1) of Mus musculus (Mouse).